Consider the following 115-residue polypeptide: Nucleoid-associated protein P9211_00201 (115 aa).

The protein belongs to the YbaB/EbfC family. As to quaternary structure, homodimer.

It localises to the cytoplasm. Its subcellular location is the nucleoid. In terms of biological role, binds to DNA and alters its conformation. May be involved in regulation of gene expression, nucleoid organization and DNA protection. The sequence is that of Nucleoid-associated protein P9211_00201 from Prochlorococcus marinus (strain MIT 9211).